Consider the following 552-residue polypeptide: Transcription factor kayak (552 aa).

Disordered regions lie at residues 110 to 145 (LAQGSDSEDSNASYNDTQMNEEQDTTDTSSAHTDST) and 177 to 234 (GAAS…KRRV). Positions 111 to 127 (AQGSDSEDSNASYNDTQ) are enriched in polar residues. Positions 135–145 (TDTSSAHTDST) are enriched in low complexity. The span at 177–192 (GAASVGSSNANTSNTP) shows a compositional bias: polar residues. A bZIP domain is found at 212–275 (EQKRAVRRER…NQLEYCLAAH (64 aa)). The interval 214–233 (KRAVRRERNKQAAARCRKRR) is basic motif. Positions 240 to 247 (LTEEVEQL) are leucine-zipper. A compositionally biased stretch (low complexity) spans 304–325 (AGSSGSGASSHHNHNSNDSSNG). 3 disordered regions span residues 304 to 346 (AGSS…PLDL), 365 to 390 (LDGAIDSGSSLDQDGPPPSKRITLPP), and 514 to 552 (GGTGLTPVSGPLVPNSSSANKHPLELPTPTAEPSKLVSL). Polar residues predominate over residues 333–343 (TLNSTGRSNSP). Ser-342 bears the Phosphoserine mark.

The protein belongs to the bZIP family. Fos subfamily. As to quaternary structure, homodimer. Heterodimer with Jra. The kay-Jra heterodimer binds more stably to the AP-1 site than either of the two proteins alone.

It localises to the nucleus. In terms of biological role, developmentally regulated transcription factor AP-1 binds and recognizes the enhancer DNA sequence: 5'-TGA[CG]TCA-3'. May play a role in the function or determination of a particular subset of cells in the developing embryo. It is able to carry out its function either independently of or in conjunction with Jra. The protein is Transcription factor kayak of Drosophila yakuba (Fruit fly).